A 155-amino-acid polypeptide reads, in one-letter code: uncharacterized protein (155 aa).

5 helical membrane-spanning segments follow: residues 4–24, 46–66, 77–97, 101–121, and 130–150; these read IVGALAVFVITYALFSAAGYL, AIGIIWAILFALISLSAAIVY, FWFTLLINYVLNQAFSYFQFT, LLAASLDCLLVAITAIVLLII, and SYLLLPYFLWSAFATFLSFTI.

This sequence belongs to the TspO/BZRP family.

Its subcellular location is the cell membrane. This is an uncharacterized protein from Bacillus subtilis (strain 168).